The following is a 479-amino-acid chain: Protein kinase 2 (479 aa).

The disordered stretch occupies residues 1 to 136 (MGKGQSKIKN…NGNDDEDEGP (136 aa)). Low complexity-rich tracts occupy residues 52 to 65 (AQQQ…TTAA) and 79 to 96 (IPAP…TPTI). The segment covering 102 to 115 (NTDNNNINGASNEA) has biased composition (polar residues). The Protein kinase domain occupies 153 to 407 (FELLNVIGKG…GGEVKQHPWF (255 aa)). ATP contacts are provided by residues 159–167 (IGKGSFGKV) and Lys-182. The active-site Proton acceptor is Asp-276. The residue at position 309 (Thr-309) is a Phosphothreonine; by autocatalysis. Positions 408 to 479 (KNIDWEKLDR…TYVADSILKD (72 aa)) constitute an AGC-kinase C-terminal domain. Residue Thr-470 is modified to Phosphothreonine.

It belongs to the protein kinase superfamily. AGC Ser/Thr protein kinase family. S6 kinase subfamily. Post-translationally, seems to be myristoylated.

The protein resides in the cytoplasm. It localises to the cell membrane. It catalyses the reaction L-seryl-[protein] + ATP = O-phospho-L-seryl-[protein] + ADP + H(+). The catalysed reaction is L-threonyl-[protein] + ATP = O-phospho-L-threonyl-[protein] + ADP + H(+). Its function is as follows. Required for morphogenesis during multicellular development. Phosphorylates talB, gefN, gefS, PI4P 5-kinase and gacQ. This is Protein kinase 2 (pkgB) from Dictyostelium discoideum (Social amoeba).